Reading from the N-terminus, the 370-residue chain is Protein RKD5 (370 aa).

The disordered stretch occupies residues 193-232 (DSETESEESVNEKTEHSEFENDKTEQSESDAKTEILKKKK). The span at 202–228 (VNEKTEHSEFENDKTEQSESDAKTEIL) shows a compositional bias: basic and acidic residues. One can recognise an RWP-RK domain in the interval 224-309 (KTEILKKKKR…AEKQQEKNEA (86 aa)). The stretch at 283 to 328 (HRKIKSLDCLIHDLQREAEKQQEKNEAAAMAVAKKQEKLETEKRNI) forms a coiled coil. The tract at residues 347 to 370 (NFKKRHRASRAKKNQESLVTSSST) is disordered. Residues 349–358 (KKRHRASRAK) show a composition bias toward basic residues.

The protein localises to the nucleus. Its function is as follows. Putative transcription factor. This Arabidopsis thaliana (Mouse-ear cress) protein is Protein RKD5 (RKD5).